Reading from the N-terminus, the 841-residue chain is DNA ligase (841 aa).

NAD(+)-binding positions include 54–58, 103–104, and glutamate 143; these read DAEYD and SL. The active-site N6-AMP-lysine intermediate is lysine 145. Positions 166, 203, 321, and 345 each coordinate NAD(+). Positions 471, 474, 489, and 495 each coordinate Zn(2+). The segment at 554-575 is disordered; the sequence is KTVAESDQMPSEGSSVGASGKH. The span at 561–570 shows a compositional bias: polar residues; sequence QMPSEGSSVG. A BRCT domain is found at 764-841; it reads GINKAVAGKT…SEAELLTLLG (78 aa).

Belongs to the NAD-dependent DNA ligase family. LigA subfamily. Mg(2+) serves as cofactor. Requires Mn(2+) as cofactor.

It catalyses the reaction NAD(+) + (deoxyribonucleotide)n-3'-hydroxyl + 5'-phospho-(deoxyribonucleotide)m = (deoxyribonucleotide)n+m + AMP + beta-nicotinamide D-nucleotide.. In terms of biological role, DNA ligase that catalyzes the formation of phosphodiester linkages between 5'-phosphoryl and 3'-hydroxyl groups in double-stranded DNA using NAD as a coenzyme and as the energy source for the reaction. It is essential for DNA replication and repair of damaged DNA. This is DNA ligase from Neisseria meningitidis serogroup C / serotype 2a (strain ATCC 700532 / DSM 15464 / FAM18).